A 468-amino-acid polypeptide reads, in one-letter code: 3-isopropylmalate dehydratase large subunit (468 aa).

Cys-345, Cys-405, and Cys-408 together coordinate [4Fe-4S] cluster.

This sequence belongs to the aconitase/IPM isomerase family. LeuC type 1 subfamily. Heterodimer of LeuC and LeuD. [4Fe-4S] cluster serves as cofactor.

It catalyses the reaction (2R,3S)-3-isopropylmalate = (2S)-2-isopropylmalate. The protein operates within amino-acid biosynthesis; L-leucine biosynthesis; L-leucine from 3-methyl-2-oxobutanoate: step 2/4. In terms of biological role, catalyzes the isomerization between 2-isopropylmalate and 3-isopropylmalate, via the formation of 2-isopropylmaleate. This Oceanobacillus iheyensis (strain DSM 14371 / CIP 107618 / JCM 11309 / KCTC 3954 / HTE831) protein is 3-isopropylmalate dehydratase large subunit.